The primary structure comprises 317 residues: Uridylate kinase (317 aa).

ATP is bound at residue 9–12 (KISG). Glycine 49 serves as a coordination point for UMP. The ATP site is built by glycine 50 and arginine 54. Residues aspartate 69 and 130–137 (TGRPYFTT) contribute to the UMP site. The ATP site is built by asparagine 158, tyrosine 164, and aspartate 167.

It belongs to the UMP kinase family. Homohexamer.

It localises to the cytoplasm. The catalysed reaction is UMP + ATP = UDP + ADP. It participates in pyrimidine metabolism; CTP biosynthesis via de novo pathway; UDP from UMP (UMPK route): step 1/1. With respect to regulation, inhibited by UTP. Functionally, catalyzes the reversible phosphorylation of UMP to UDP. The protein is Uridylate kinase of Malacoplasma penetrans (strain HF-2) (Mycoplasma penetrans).